We begin with the raw amino-acid sequence, 539 residues long: D-mannonate oxidoreductase (539 aa).

39 to 50 (WVHFGGGNIFRG) contributes to the NAD(+) binding site.

The protein belongs to the mannitol dehydrogenase family. UxuB subfamily.

The catalysed reaction is D-mannonate + NAD(+) = keto-D-fructuronate + NADH + H(+). The protein operates within carbohydrate metabolism. Catalyzes the reduction of D-fructuronate (D-FruA) to D-mannonate (D-ManA). In Thermotoga maritima (strain ATCC 43589 / DSM 3109 / JCM 10099 / NBRC 100826 / MSB8), this protein is D-mannonate oxidoreductase.